Here is a 169-residue protein sequence, read N- to C-terminus: Cell division inhibitor SulA (169 aa).

The interval 106-112 (ALRTGNY) is ftsZ binding. Residues 162 to 169 (KIHSNLYH) form a lon protease binding region.

It belongs to the SulA family. Interacts with FtsZ. Is rapidly cleaved and degraded by the Lon protease once DNA damage is repaired.

In terms of biological role, component of the SOS system and an inhibitor of cell division. Accumulation of SulA causes rapid cessation of cell division and the appearance of long, non-septate filaments. In the presence of GTP, binds a polymerization-competent form of FtsZ in a 1:1 ratio, thus inhibiting FtsZ polymerization and therefore preventing it from participating in the assembly of the Z ring. This mechanism prevents the premature segregation of damaged DNA to daughter cells during cell division. The polypeptide is Cell division inhibitor SulA (Shigella boydii serotype 18 (strain CDC 3083-94 / BS512)).